We begin with the raw amino-acid sequence, 614 residues long: MDQSKMRYTNQFRKTPQKPTSTEVGNHHTPAHSPMAQHETSMWNFNSLNPYFSMLNMNDGMNYARHQQNHIVTSRPPTPLTDLMSLRSFQSFPNVFMPVSRSRTSSFIQSDTDSSRLEPDDFSQNVRYCSTEIDRNNSSSKNDHLKYSRPALSRNSRSFTRSNNVLPTWSLDSNGEMRSRLSLSEVLDSGDLMKFAVDKTGCQFLEKAVKGSLTSYQKFQLFEQVIGRKDDFLKLSTNIFGNYFVQEIIGMSLTTYDDDNIKRQEKLKNFISSQMTDMCLDKFACRVIQSSLQNMDLSLACKLVQALPRDARLIAICVDQNANHVIQKVVAVIPLKNWEFIVDFVATPEHLRQICFDKYGCRVVQTIIEKLTADSINVDLTSAAQHLRERALQRLMTSVTNRCQELATNEYANYIIQHIVSNDDLAVYRECIIEKCLMRNLLSLSQEKFASHVVEKAFLHAPMELLAEMMDEIFDGYMPHPGTGKDALDIMMFHQFGNYVVQCMLTICCDAVSGRRQTKEGSYDHANSFQVWLKKLHSRVTKERHRLSRFSSGKKMIETLAHLRSTHPIYGLQSSGHESFKTDCFSTASEHDGLELEKNGIEEGNLRLMRTFSP.

The segment covering 1–24 (MDQSKMRYTNQFRKTPQKPTSTEV) has biased composition (polar residues). The segment at 1–34 (MDQSKMRYTNQFRKTPQKPTSTEVGNHHTPAHSP) is disordered. Positions 160-564 (TRSNNVLPTW…KMIETLAHLR (405 aa)) constitute a PUM-HD domain. Pumilio repeat units lie at residues 185-223 (EVLD…QLFE), 224-263 (QVIG…NIKR), 269-305 (NFIS…KLVQ), 306-342 (ALPR…EFIV), 343-382 (DFVA…DLTS), 398-434 (SVTN…CIIE), 436-471 (CLMR…EMMD), and 483-519 (TGKD…RQTK). Residues 283 to 614 (FACRVIQSSL…NLRLMRTFSP (332 aa)) form a binding to gld-3 isoform A region.

As to quaternary structure, interacts (via C-terminus) with gld-3 isoform A in an RNA-independent manner. In terms of tissue distribution, expressed specifically in the germline (at protein level).

Its subcellular location is the cytoplasm. Functionally, RNA-binding protein that binds to the consensus sequence 5'-UGUGCCAUA-3' in mRNA 3'-UTRs. Involved in the control of stem cells and sex determination in the C.elegans hermaphrodite germline. May also play a role in the hermaphrodite germline proliferation and oogenesis. Binds specifically to the regulatory region of fem-3 3'-UTR and mediates the sperm/oocyte switch. Negatively regulates gld-3 expression, possibly by directly binding to two sites within the 3'-UTR of gld-3 isoform b. In association with the cye-1/cdk-2 complex, negatively regulates gld-1 expression in the distal germline cells of the mitotic zone. By binding to the 3'-UTR, represses phosphatase lip-1 expression in the distal part of the germline mitotic zone. Suppresses germline tumor formation by preventing the dedifferentiation of secondary spermatocytes. The sequence is that of Fem-3 mRNA-binding factor 1 (fbf-1) from Caenorhabditis elegans.